A 338-amino-acid polypeptide reads, in one-letter code: DNA-directed RNA polymerase subunit alpha (338 aa).

The tract at residues 1 to 225 is alpha N-terminal domain (alpha-NTD); that stretch reads MLISQRPTIT…ELFGLARELN (225 aa). Residues 240 to 338 form an alpha C-terminal domain (alpha-CTD) region; sequence TEYIAAYSMP…YIDVEAEDSE (99 aa). The segment at 319–338 is disordered; the sequence is LEGYDAETGGYIDVEAEDSE.

It belongs to the RNA polymerase alpha chain family. As to quaternary structure, homodimer. The RNAP catalytic core consists of 2 alpha, 1 beta, 1 beta' and 1 omega subunit. When a sigma factor is associated with the core the holoenzyme is formed, which can initiate transcription.

The enzyme catalyses RNA(n) + a ribonucleoside 5'-triphosphate = RNA(n+1) + diphosphate. Functionally, DNA-dependent RNA polymerase catalyzes the transcription of DNA into RNA using the four ribonucleoside triphosphates as substrates. In Corynebacterium glutamicum (strain R), this protein is DNA-directed RNA polymerase subunit alpha.